Reading from the N-terminus, the 256-residue chain is Transcription factor bHLH131 (256 aa).

One can recognise a bHLH domain in the interval 91-140 (VAAKKHSDAERRRRLRINSQFATLRTILPNLVKQDKASVLGETVRYFNEL).

As to quaternary structure, homodimer.

It localises to the nucleus. This Arabidopsis thaliana (Mouse-ear cress) protein is Transcription factor bHLH131 (BHLH131).